Consider the following 547-residue polypeptide: Chaperonin GroEL 1 (547 aa).

ATP contacts are provided by residues 30–33, lysine 51, 87–91, glycine 415, and aspartate 495; these read TLGP and DGTTT.

The protein belongs to the chaperonin (HSP60) family. In terms of assembly, forms a cylinder of 14 subunits composed of two heptameric rings stacked back-to-back. Interacts with the co-chaperonin GroES.

The protein localises to the cytoplasm. The catalysed reaction is ATP + H2O + a folded polypeptide = ADP + phosphate + an unfolded polypeptide.. Together with its co-chaperonin GroES, plays an essential role in assisting protein folding. The GroEL-GroES system forms a nano-cage that allows encapsulation of the non-native substrate proteins and provides a physical environment optimized to promote and accelerate protein folding. The sequence is that of Chaperonin GroEL 1 from Azorhizobium caulinodans (strain ATCC 43989 / DSM 5975 / JCM 20966 / LMG 6465 / NBRC 14845 / NCIMB 13405 / ORS 571).